The chain runs to 89 residues: Small ribosomal subunit protein uS15 (89 aa).

The segment covering 1–21 (MSVDAETKTKIIKDNARDKND) has biased composition (basic and acidic residues). A disordered region spans residues 1–26 (MSVDAETKTKIIKDNARDKNDTGSPE).

It belongs to the universal ribosomal protein uS15 family. In terms of assembly, part of the 30S ribosomal subunit. Forms a bridge to the 50S subunit in the 70S ribosome, contacting the 23S rRNA.

One of the primary rRNA binding proteins, it binds directly to 16S rRNA where it helps nucleate assembly of the platform of the 30S subunit by binding and bridging several RNA helices of the 16S rRNA. In terms of biological role, forms an intersubunit bridge (bridge B4) with the 23S rRNA of the 50S subunit in the ribosome. The protein is Small ribosomal subunit protein uS15 of Erythrobacter litoralis (strain HTCC2594).